The primary structure comprises 568 residues: Sulfite reductase [NADPH] hemoprotein beta-component (568 aa).

[4Fe-4S] cluster is bound by residues cysteine 425, cysteine 431, cysteine 470, and cysteine 474. Residue cysteine 474 coordinates siroheme.

Belongs to the nitrite and sulfite reductase 4Fe-4S domain family. Alpha(8)-beta(8). The alpha component is a flavoprotein, the beta component is a hemoprotein. Siroheme is required as a cofactor. Requires [4Fe-4S] cluster as cofactor.

The enzyme catalyses hydrogen sulfide + 3 NADP(+) + 3 H2O = sulfite + 3 NADPH + 4 H(+). The protein operates within sulfur metabolism; hydrogen sulfide biosynthesis; hydrogen sulfide from sulfite (NADPH route): step 1/1. Functionally, component of the sulfite reductase complex that catalyzes the 6-electron reduction of sulfite to sulfide. This is one of several activities required for the biosynthesis of L-cysteine from sulfate. This is Sulfite reductase [NADPH] hemoprotein beta-component from Xanthomonas campestris pv. campestris (strain B100).